A 260-amino-acid polypeptide reads, in one-letter code: Adenosylcobinamide-GDP ribazoletransferase (260 aa).

7 helical membrane passes run 31–51 (IIFFPFIGFLEGVFCIFLVNI), 55–75 (IFSSSVISIILLVFLFSVRGI), 111–131 (VIGVAGAVALVLDVLCRFAFV), 140–160 (FLIFLFMFCFSRWIVIPLMYY), 177–197 (ISSWQVIISTVLPIFLLVYFT), 202–222 (FIFLPLIALFLFFISYILKKF), and 234–254 (HLGATVEITEIVFLICFLLGE).

Belongs to the CobS family. Requires Mg(2+) as cofactor.

The protein localises to the cell inner membrane. The catalysed reaction is alpha-ribazole + adenosylcob(III)inamide-GDP = adenosylcob(III)alamin + GMP + H(+). The enzyme catalyses alpha-ribazole 5'-phosphate + adenosylcob(III)inamide-GDP = adenosylcob(III)alamin 5'-phosphate + GMP + H(+). It participates in cofactor biosynthesis; adenosylcobalamin biosynthesis; adenosylcobalamin from cob(II)yrinate a,c-diamide: step 7/7. Functionally, joins adenosylcobinamide-GDP and alpha-ribazole to generate adenosylcobalamin (Ado-cobalamin). Also synthesizes adenosylcobalamin 5'-phosphate from adenosylcobinamide-GDP and alpha-ribazole 5'-phosphate. The polypeptide is Adenosylcobinamide-GDP ribazoletransferase (Thermodesulfovibrio yellowstonii (strain ATCC 51303 / DSM 11347 / YP87)).